A 191-amino-acid chain; its full sequence is Fe/S biogenesis protein NfuA (191 aa).

2 residues coordinate [4Fe-4S] cluster: cysteine 149 and cysteine 152.

This sequence belongs to the NfuA family. In terms of assembly, homodimer. [4Fe-4S] cluster is required as a cofactor.

Functionally, involved in iron-sulfur cluster biogenesis. Binds a 4Fe-4S cluster, can transfer this cluster to apoproteins, and thereby intervenes in the maturation of Fe/S proteins. Could also act as a scaffold/chaperone for damaged Fe/S proteins. This Escherichia coli O7:K1 (strain IAI39 / ExPEC) protein is Fe/S biogenesis protein NfuA.